The primary structure comprises 685 residues: Methionine--tRNA ligase (685 aa).

Residues Cys-142, Cys-145, Cys-155, and Cys-158 each contribute to the Zn(2+) site. The 'KMSKS' region signature appears at 330 to 334; the sequence is KMSKS. An ATP-binding site is contributed by Lys-333. The 102-residue stretch at 584–685 folds into the tRNA-binding domain; that stretch reads DFIKVDLRVA…SGAKPGDKVS (102 aa).

The protein belongs to the class-I aminoacyl-tRNA synthetase family. MetG type 1 subfamily. As to quaternary structure, homodimer. Zn(2+) serves as cofactor.

The protein localises to the cytoplasm. It carries out the reaction tRNA(Met) + L-methionine + ATP = L-methionyl-tRNA(Met) + AMP + diphosphate. Its function is as follows. Is required not only for elongation of protein synthesis but also for the initiation of all mRNA translation through initiator tRNA(fMet) aminoacylation. This Acinetobacter baylyi (strain ATCC 33305 / BD413 / ADP1) protein is Methionine--tRNA ligase.